A 49-amino-acid polypeptide reads, in one-letter code: Small, acid-soluble spore protein O (49 aa).

The tract at residues 1 to 49 (MGKRKANHTISGMNAASAQGQGTGYNEEFANEPFTPAERQNNKKRKKNQ) is disordered. Residues 8 to 20 (HTISGMNAASAQG) show a composition bias toward polar residues.

This sequence belongs to the SspO family.

Its subcellular location is the spore core. The chain is Small, acid-soluble spore protein O from Bacillus cereus (strain ATCC 14579 / DSM 31 / CCUG 7414 / JCM 2152 / NBRC 15305 / NCIMB 9373 / NCTC 2599 / NRRL B-3711).